The primary structure comprises 384 residues: Transcription factor 7 (384 aa).

Residues 1–16 are compositionally biased toward gly residues; that stretch reads MPQLDSGGGGAGGGDD. The interval 1–59 is CTNNB1-binding; the sequence is MPQLDSGGGGAGGGDDLGAPDELLAFQDEGEEQDDKSRDSAAGPERDLAELKSSLVNES. 3 disordered regions span residues 1-88, 133-183, and 337-384; these read MPQL…LGRE, PPSG…QKQV, and SARD…MTVL. Residues 35–50 show a composition bias toward basic and acidic residues; the sequence is DKSRDSAAGPERDLAE. The span at 62 to 78 shows a compositional bias: gly residues; it reads AAGGAGIPGVPGAGAGA. Residues 269-337 constitute a DNA-binding region (HMG box); the sequence is IKKPLNAFML…LHMQLYPGWS (69 aa). The Nuclear localization signal motif lies at 344-348; it reads KKKRR. A compositionally biased stretch (basic and acidic residues) spans 352-370; the sequence is KHQESTTGGKRNAFGTYPE. A compositionally biased stretch (low complexity) spans 374 to 384; it reads APAPFLPMTVL.

Belongs to the TCF/LEF family. As to quaternary structure, binds the armadillo repeat of CTNNB1 and forms a stable complex. Interacts with TLE5, TLE1, TLE2, TLE3 and TLE4. Interacts with MLLT11. Long isoform interacts (via N-terminus) with SOX13; inhibits WNT-mediated transcriptional activity. Interacts with DAZAP2. Predominantly expressed in T-cells. Also detected in proliferating intestinal epithelial cells and in the basal epithelial cells of mammary gland epithelium.

It is found in the nucleus. In terms of biological role, transcriptional activator involved in T-cell lymphocyte differentiation. Necessary for the survival of CD4(+) CD8(+) immature thymocytes. Isoforms lacking the N-terminal CTNNB1 binding domain cannot fulfill this role. Binds to the T-lymphocyte-specific enhancer element (5'-WWCAAAG-3') found in the promoter of the CD3E gene. Represses expression of the T-cell receptor gamma gene in alpha-beta T-cell lineages. Required for the development of natural killer receptor-positive lymphoid tissue inducer T-cells. TLE1, TLE2, TLE3 and TLE4 repress transactivation mediated by TCF7 and CTNNB1. May also act as feedback transcriptional repressor of CTNNB1 and TCF7L2 target genes. In Homo sapiens (Human), this protein is Transcription factor 7.